The primary structure comprises 461 residues: Probable metabolite transport protein CsbC (461 aa).

The Cytoplasmic portion of the chain corresponds to 1 to 14 (MKKDTRKYMIYFFG). The chain crosses the membrane as a helical span at residues 15–35 (ALGGLLYGYDTGVISGALLFI). Topologically, residues 36–38 (NND) are extracellular. Residues 39–59 (IPLTTLTEGLVVSMLLLGAIF) form a helical membrane-spanning segment. Residues 60 to 76 (GSALSGTCSDRWGRRKV) lie on the Cytoplasmic side of the membrane. The chain crosses the membrane as a helical span at residues 77-97 (VFVLSIIFIIGALACAFSQTI). The Extracellular segment spans residues 98–104 (GMLIASR). The chain crosses the membrane as a helical span at residues 105 to 125 (VILGLAVGGSTALVPVYLSEM). Residues 126-139 (APTKIRGTLGTMNN) are Cytoplasmic-facing. A helical transmembrane segment spans residues 140–160 (LMIVTGILLAYIVNYLFTPFE). Residues 161–163 (AWR) are Extracellular-facing. Residues 164–184 (WMVGLAAVPAVLLLIGIAFMP) form a helical membrane-spanning segment. At 185 to 241 (ESPRWLVKRGSEEEARRIMNITHDPKDIEMELAEMKQGEAEKKETTLGVLKAKWIRP) the chain is on the cytoplasmic side. A helical membrane pass occupies residues 242 to 262 (MLLIGVGLAIFQQAVGINTVI). Residues 263–280 (YYAPTIFTKAGLGTSASA) are Extracellular-facing. Residues 281–301 (LGTMGIGILNVIMCITAMILI) traverse the membrane as a helical segment. Over 302–308 (DRVGRKK) the chain is Cytoplasmic. Residues 309–329 (LLIWGSVGITLSLAALSGVLL) form a helical membrane-spanning segment. The Extracellular portion of the chain corresponds to 330 to 341 (TLGLSASTAWMT). The helical transmembrane segment at 342 to 362 (VVFLGVYIVFYQATWGPVVWV) threads the bilayer. Over 363-378 (LMPELFPSKARGAATG) the chain is Cytoplasmic. The helical transmembrane segment at 379 to 399 (FTTLVLSAANLIVSLVFPLML) threads the bilayer. Topologically, residues 400–402 (SAM) are extracellular. A helical membrane pass occupies residues 403–423 (GIAWVFMVFSVICLLSFFFAF). At 424–461 (YMVPETKGKSLEEIEASLKKRFKKKKSTQNQVLNERTL) the chain is on the cytoplasmic side.

Belongs to the major facilitator superfamily. Sugar transporter (TC 2.A.1.1) family.

The protein localises to the cell membrane. In terms of biological role, could serve either a nutritional or an osmotic protection function. This chain is Probable metabolite transport protein CsbC (csbC), found in Bacillus subtilis (strain 168).